The chain runs to 432 residues: 3-phosphoshikimate 1-carboxyvinyltransferase (432 aa).

Positions 23, 24, and 28 each coordinate 3-phosphoshikimate. Phosphoenolpyruvate is bound at residue Lys-23. 2 residues coordinate phosphoenolpyruvate: Gly-95 and Arg-123. 3-phosphoshikimate contacts are provided by Ser-167, Gln-169, Asp-317, and Lys-344. Gln-169 is a binding site for phosphoenolpyruvate. Residue Asp-317 is the Proton acceptor of the active site. Residues Arg-348 and Arg-390 each coordinate phosphoenolpyruvate.

This sequence belongs to the EPSP synthase family. As to quaternary structure, monomer.

It is found in the cytoplasm. The catalysed reaction is 3-phosphoshikimate + phosphoenolpyruvate = 5-O-(1-carboxyvinyl)-3-phosphoshikimate + phosphate. Its pathway is metabolic intermediate biosynthesis; chorismate biosynthesis; chorismate from D-erythrose 4-phosphate and phosphoenolpyruvate: step 6/7. Its function is as follows. Catalyzes the transfer of the enolpyruvyl moiety of phosphoenolpyruvate (PEP) to the 5-hydroxyl of shikimate-3-phosphate (S3P) to produce enolpyruvyl shikimate-3-phosphate and inorganic phosphate. The protein is 3-phosphoshikimate 1-carboxyvinyltransferase of Staphylococcus aureus (strain N315).